A 270-amino-acid polypeptide reads, in one-letter code: tRNA pseudouridine synthase A (270 aa).

The Nucleophile role is filled by Asp60. Tyr118 lines the substrate pocket.

The protein belongs to the tRNA pseudouridine synthase TruA family. Homodimer.

The catalysed reaction is uridine(38/39/40) in tRNA = pseudouridine(38/39/40) in tRNA. Functionally, formation of pseudouridine at positions 38, 39 and 40 in the anticodon stem and loop of transfer RNAs. This chain is tRNA pseudouridine synthase A, found in Cronobacter sakazakii (strain ATCC BAA-894) (Enterobacter sakazakii).